Reading from the N-terminus, the 152-residue chain is uncharacterized protein (152 aa).

The next 5 helical transmembrane spans lie at 2–22, 33–53, 58–78, 97–117, and 122–142; these read GVVF…LKLM, LKMI…WLIM, FLIE…LIYL, FMGN…IEYV, and IASP…FFNC.

It localises to the cell membrane. This is an uncharacterized protein from Methanocaldococcus jannaschii (strain ATCC 43067 / DSM 2661 / JAL-1 / JCM 10045 / NBRC 100440) (Methanococcus jannaschii).